We begin with the raw amino-acid sequence, 485 residues long: Ribulose bisphosphate carboxylase large chain 2 (485 aa).

Substrate-binding residues include N124 and T174. Residue K176 is the Proton acceptor of the active site. K178 contacts substrate. Positions 202, 204, and 205 each coordinate Mg(2+). The residue at position 202 (K202) is an N6-carboxylysine. H294 serves as the catalytic Proton acceptor. R295, H327, and S379 together coordinate substrate.

Belongs to the RuBisCO large chain family. Type I subfamily. As to quaternary structure, heterohexadecamer of 8 large chains and 8 small chains. Requires Mg(2+) as cofactor.

The catalysed reaction is 2 (2R)-3-phosphoglycerate + 2 H(+) = D-ribulose 1,5-bisphosphate + CO2 + H2O. It catalyses the reaction D-ribulose 1,5-bisphosphate + O2 = 2-phosphoglycolate + (2R)-3-phosphoglycerate + 2 H(+). Functionally, ruBisCO catalyzes two reactions: the carboxylation of D-ribulose 1,5-bisphosphate, the primary event in carbon dioxide fixation, as well as the oxidative fragmentation of the pentose substrate. Both reactions occur simultaneously and in competition at the same active site. In Rhodopseudomonas palustris (strain BisB5), this protein is Ribulose bisphosphate carboxylase large chain 2.